The primary structure comprises 56 residues: Large ribosomal subunit protein uL30 (56 aa).

The protein belongs to the universal ribosomal protein uL30 family. As to quaternary structure, part of the 50S ribosomal subunit.

This chain is Large ribosomal subunit protein uL30, found in Oleidesulfovibrio alaskensis (strain ATCC BAA-1058 / DSM 17464 / G20) (Desulfovibrio alaskensis).